We begin with the raw amino-acid sequence, 355 residues long: DNA-directed RNA polymerase subunit alpha (355 aa).

The alpha N-terminal domain (alpha-NTD) stretch occupies residues 1–233 (MVREKVRVST…DLFIPFLHKE (233 aa)). Residues 268–355 (KKKIALKSIF…EIYCYSIFFH (88 aa)) form an alpha C-terminal domain (alpha-CTD) region.

The protein belongs to the RNA polymerase alpha chain family. As to quaternary structure, in plastids the minimal PEP RNA polymerase catalytic core is composed of four subunits: alpha, beta, beta', and beta''. When a (nuclear-encoded) sigma factor is associated with the core the holoenzyme is formed, which can initiate transcription.

Its subcellular location is the plastid. The protein resides in the chloroplast. The enzyme catalyses RNA(n) + a ribonucleoside 5'-triphosphate = RNA(n+1) + diphosphate. DNA-dependent RNA polymerase catalyzes the transcription of DNA into RNA using the four ribonucleoside triphosphates as substrates. This chain is DNA-directed RNA polymerase subunit alpha, found in Jasminum nudiflorum (Winter jasmine).